Consider the following 268-residue polypeptide: Microtubule-associated protein RP/EB family member 1 (268 aa).

At A2 the chain carries N-acetylalanine. The 103-residue stretch at 14-116 (NLSRHDMLAW…FVQWFKKFFD (103 aa)) folds into the Calponin-homology (CH) domain. At K66 the chain carries N6-crotonyllysine. A Phosphotyrosine modification is found at Y124. Positions 124 to 268 (YDPVAARQGQ…GGPQEEQEEY (145 aa)) are interaction with MTUS2/TIP150. Low complexity predominate over residues 147 to 160 (NKPKKPLSSSSAAP). Residues 147 to 184 (NKPKKPLSSSSAAPQRPITTHRTTATPKAGPGVVRKNP) are disordered. Position 155 is a phosphoserine (S155). The span at 163–172 (PITTHRTTAT) shows a compositional bias: polar residues. Residues 185–255 (GVGNGDDEAA…LYATDEGFVI (71 aa)) form the EB1 C-terminal domain. The interval 185–268 (GVGNGDDEAA…GGPQEEQEEY (84 aa)) is interaction with CDK5RAP2. The interaction with APC stretch occupies residues 206 to 211 (TVEDLE). The DCTN1-binding stretch occupies residues 208-268 (EDLEKERDFY…GGPQEEQEEY (61 aa)). Position 220 is an N6-acetyllysine (K220). Residues 220-242 (KLRNIELICQENEGENNPVLQRI) are APC-binding. Residues 232 to 255 (EGENNPVLQRIVDILYATDEGFVI) are interaction with SKA1.

It belongs to the MAPRE family. Homodimer. Heterodimer with MAPRE3. Interacts with DCTN1, DCTN2, TERF1 and dynein intermediate chain. Interaction with DIAPH1 and DIAPH2. Interacts (via C-terminal residues 206-211) with APC (via C-terminal residues 2674-2845); the interaction inhibits association with and bundling of F-actin. Interacts with CLASP2, DST, KIF2C and STIM1; probably required for their targeting to the growing microtubule plus ends. Interacts with MTUS2; interaction is direct and probably targets MTUS2 to microtubules. Interacts (via C-terminus) with SKA1 (via SXIP motif); the interaction is direct and stabilizes the kinetochore-microtubule attachment of the SKA1 complex. Interacts with APC2. Interacts with CLASP1. Interacts with CDK5RAP2. Interacts with MACF1. Interacts with RABL2/RABL2A; binds preferentially to GTP-bound RABL2. Interacts with KCNAB2. Interacts (via C-terminus) with CLIP1. Interacts with SLAIN2 and SLAIN1. Interacts with KIF18B; this interaction is required for efficient accumulation of KIF18B at microtubule plus ends. Interacts with MISP. Interacts with KNSTRN. Interacts with NCKAP5L. Interacts with CAMSAP2. Interacts with PDE4DIP isoform 13/MMG8/SMYLE; this interaction is required for its recruitment to the Golgi apparatus. Forms a pericentrosomal complex with AKAP9, CDK5RAP2 and PDE4DIP isoform 13/MMG8/SMYLE; within this complex, MAPRE1 binding to CDK5RAP2 may be mediated by PDE4DIP. Interacts with AKNA. Interacts with GAS2L1, GAS2L2, and GAS2L3. Acetylation at Lys-220 by KAT2B/PCAF promotes dynamic kinetochore-microtubule interactions in early mitosis. Post-translationally, crotonylated by KAT5 during mitosis, promoting astral microtubule plasticity and dynamic connection between astral microtubules and the cortex during mitotic chromosome segregation, thereby ensuring accurate spindle positioning in mitosis. Decrotonylated by HDAC3.

Its subcellular location is the cytoplasm. The protein resides in the cytoskeleton. It localises to the microtubule organizing center. The protein localises to the centrosome. It is found in the golgi apparatus. Its subcellular location is the spindle. The protein resides in the spindle pole. Functionally, plus-end tracking protein (+TIP) that binds to the plus-end of microtubules and regulates the dynamics of the microtubule cytoskeleton. Recruits other +TIP proteins to microtubules by binding to a conserved Ser-X-Leu-Pro (SXLP) motif in their polypeptide chains. Promotes cytoplasmic microtubule nucleation and elongation. Involved in mitotic spindle positioning by stabilizing microtubules and promoting dynamic connection between astral microtubules and the cortex during mitotic chromosome segregation. Assists chromosome alignment in metaphase by recruiting the SKA complex to the spindle and stabilizing its interactions with microtubule bundles (K-fibers). Also acts as a regulator of minus-end microtubule organization: interacts with the complex formed by AKAP9 and PDE4DIP, leading to recruit CAMSAP2 to the Golgi apparatus, thereby tethering non-centrosomal minus-end microtubules to the Golgi, an important step for polarized cell movement. Promotes elongation of CAMSAP2-decorated microtubule stretches on the minus-end of microtubules. Acts as a regulator of autophagosome transport via interaction with CAMSAP2. Functions downstream of Rho GTPases and DIAPH1 in stable microtubule formation. May play a role in cell migration. This Bos taurus (Bovine) protein is Microtubule-associated protein RP/EB family member 1 (MAPRE1).